Here is a 906-residue protein sequence, read N- to C-terminus: Alanine--tRNA ligase (906 aa).

Zn(2+) contacts are provided by His600, His604, Cys703, and His707.

Belongs to the class-II aminoacyl-tRNA synthetase family. In terms of assembly, homodimer. Zn(2+) serves as cofactor.

The protein resides in the cytoplasm. The catalysed reaction is tRNA(Ala) + L-alanine + ATP = L-alanyl-tRNA(Ala) + AMP + diphosphate. Its function is as follows. Catalyzes the attachment of alanine to tRNA(Ala) in a two-step reaction: alanine is first activated by ATP to form Ala-AMP and then transferred to the acceptor end of tRNA(Ala). Incorrectly charged aminoacyl-tRNA(Ala) is also edited in situ by the editing domain. The sequence is that of Alanine--tRNA ligase (alaS) from Archaeoglobus fulgidus (strain ATCC 49558 / DSM 4304 / JCM 9628 / NBRC 100126 / VC-16).